The following is a 335-amino-acid chain: Glyceraldehyde-3-phosphate dehydrogenase (335 aa).

Residues 13 to 14, D34, M79, and S121 contribute to the NAD(+) site; that span reads RI. D-glyceraldehyde 3-phosphate-binding positions include 151–153, T182, 211–212, and R234; these read SCT and TG. C152 acts as the Nucleophile in catalysis. At C152 the chain carries S-nitrosocysteine. N316 is a binding site for NAD(+).

This sequence belongs to the glyceraldehyde-3-phosphate dehydrogenase family. As to quaternary structure, homotetramer. Post-translationally, S-nitrosylation of Cys-152 leads to translocation to the nucleus.

Its subcellular location is the cytoplasm. It is found in the cytosol. The protein localises to the cytoskeleton. It localises to the nucleus. The catalysed reaction is D-glyceraldehyde 3-phosphate + phosphate + NAD(+) = (2R)-3-phospho-glyceroyl phosphate + NADH + H(+). It catalyses the reaction S-nitroso-L-cysteinyl-[GAPDH] + L-cysteinyl-[protein] = L-cysteinyl-[GAPDH] + S-nitroso-L-cysteinyl-[protein]. It functions in the pathway carbohydrate degradation; glycolysis; pyruvate from D-glyceraldehyde 3-phosphate: step 1/5. Its function is as follows. Has both glyceraldehyde-3-phosphate dehydrogenase and nitrosylase activities, thereby playing a role in glycolysis and nuclear functions, respectively. Glyceraldehyde-3-phosphate dehydrogenase is a key enzyme in glycolysis that catalyzes the first step of the pathway by converting D-glyceraldehyde 3-phosphate (G3P) into 3-phospho-D-glyceroyl phosphate. Participates in nuclear events including transcription, RNA transport, DNA replication and apoptosis. Nuclear functions are probably due to the nitrosylase activity that mediates cysteine S-nitrosylation of nuclear target proteins such as SIRT1, HDAC2 and PRKDC. This is Glyceraldehyde-3-phosphate dehydrogenase (gapdh) from Oncorhynchus mykiss (Rainbow trout).